Here is a 115-residue protein sequence, read N- to C-terminus: Glutaredoxin 4 (115 aa).

The region spanning 5–107 (IEKIQRQIAE…QLIKETAAKY (103 aa)) is the Glutaredoxin domain. Position 22 (Lys22) interacts with glutathione. Cys30 is a binding site for [2Fe-2S] cluster. Residues Arg59, Phe71, and 84–85 (CD) contribute to the glutathione site.

Belongs to the glutaredoxin family. Monothiol subfamily. Homodimer.

It is found in the cytoplasm. Its function is as follows. Monothiol glutaredoxin involved in the biogenesis of iron-sulfur clusters. The sequence is that of Glutaredoxin 4 (grxD) from Shigella flexneri.